The sequence spans 199 residues: Recombination protein RecR (199 aa).

The C4-type zinc finger occupies 57-72 (CEICGNMDTKNICHIC). A Toprim domain is found at 80-175 (STIAIVETVA…KISRLASGIP (96 aa)).

The protein belongs to the RecR family.

In terms of biological role, may play a role in DNA repair. It seems to be involved in an RecBC-independent recombinational process of DNA repair. It may act with RecF and RecO. The chain is Recombination protein RecR from Rickettsia typhi (strain ATCC VR-144 / Wilmington).